A 210-amino-acid chain; its full sequence is T-cell antigen CD7 (210 aa).

The N-terminal stretch at 1–23 is a signal peptide; it reads MTQQAVLALLLTLAGILPGPLDA. One can recognise an Ig-like domain in the interval 24–129; that stretch reads QDVHQSPRLT…RGLFTTVVVK (106 aa). Residues 24-150 lie on the Extracellular side of the membrane; it reads QDVHQSPRLT…EPLQTSFSFP (127 aa). N-linked (GlcNAc...) asparagine glycosylation is found at N42, N86, and N93. A disulfide bond links C45 and C111. Residues 151–171 traverse the membrane as a helical segment; the sequence is AAIAVGFFFTGLLLGVVCSML. C168 carries the S-palmitoyl cysteine lipid modification. The Cytoplasmic segment spans residues 172 to 210; sequence RKIQIKKLCASGIKESPCVVYEDMSYSNRKTPCIPNQYQ.

Interacts with SECTM1.

The protein localises to the membrane. Functionally, transmembrane glycoprotein expressed by T-cells and natural killer (NK) cells and their precursors. Plays a costimulatory role in T-cell activation upon binding to its ligand K12/SECTM1. In turn, mediates the production of cytokines such as IL-2. On resting NK-cells, CD7 activation results in a significant induction of gamma-interferon levels. The chain is T-cell antigen CD7 (Cd7) from Mus musculus (Mouse).